The following is a 439-amino-acid chain: tRNA(Ile)-lysidine synthase (439 aa).

25 to 30 (SGGLDS) contacts ATP.

It belongs to the tRNA(Ile)-lysidine synthase family.

The protein resides in the cytoplasm. The catalysed reaction is cytidine(34) in tRNA(Ile2) + L-lysine + ATP = lysidine(34) in tRNA(Ile2) + AMP + diphosphate + H(+). In terms of biological role, ligates lysine onto the cytidine present at position 34 of the AUA codon-specific tRNA(Ile) that contains the anticodon CAU, in an ATP-dependent manner. Cytidine is converted to lysidine, thus changing the amino acid specificity of the tRNA from methionine to isoleucine. In Edwardsiella ictaluri (strain 93-146), this protein is tRNA(Ile)-lysidine synthase.